Here is a 418-residue protein sequence, read N- to C-terminus: MKATIVTVGDEILIGQIIDTNSSFIAKSLDKIGIGVHEMLSITDDKQHILQTLSLLQNKVDVVIITGGLGPTKDDITKKTLCEYFNDKLIINEKVLVHVTQLIEDYFKRPITQVNKDQALVPSKCEVLFNQVGTAPGMWLQKENTVFISLPGVPYEMKYLIENEVIPKLIAKYDRPFIIHKTILTYGVGESLLAERIETWEDNLPKFIKLAYLPSPGRVRLRLSARGVDENVLKNEISLQVQKLQLIISDCIVGFEEDETLEVVLGKLLTEKKLTISTAESCTGGKIASTITSVSGSSNYFKGSIVSYATEAKVAVLGISQEKINKFSVVSTQVAEEMATQVQKKFKTNFAIATTGNAGPNKGDANAEVGTVFIAIATPKGVFSEKFNFGQPREKVIDRALNQALEMIYKEILKNYSK.

The protein belongs to the CinA family.

The protein is CinA-like protein of Flavobacterium psychrophilum (strain ATCC 49511 / DSM 21280 / CIP 103535 / JIP02/86).